A 435-amino-acid polypeptide reads, in one-letter code: Serine--tRNA ligase (435 aa).

An L-serine-binding site is contributed by 241-243; it reads TAE. Residue 272 to 274 coordinates ATP; sequence RSE. E295 provides a ligand contact to L-serine. ATP is bound at residue 359-362; sequence EISS. Position 395 (S395) interacts with L-serine.

The protein belongs to the class-II aminoacyl-tRNA synthetase family. Type-1 seryl-tRNA synthetase subfamily. Homodimer. The tRNA molecule binds across the dimer.

The protein localises to the cytoplasm. The enzyme catalyses tRNA(Ser) + L-serine + ATP = L-seryl-tRNA(Ser) + AMP + diphosphate + H(+). It carries out the reaction tRNA(Sec) + L-serine + ATP = L-seryl-tRNA(Sec) + AMP + diphosphate + H(+). Its pathway is aminoacyl-tRNA biosynthesis; selenocysteinyl-tRNA(Sec) biosynthesis; L-seryl-tRNA(Sec) from L-serine and tRNA(Sec): step 1/1. Catalyzes the attachment of serine to tRNA(Ser). Is also able to aminoacylate tRNA(Sec) with serine, to form the misacylated tRNA L-seryl-tRNA(Sec), which will be further converted into selenocysteinyl-tRNA(Sec). This Actinobacillus pleuropneumoniae serotype 5b (strain L20) protein is Serine--tRNA ligase.